Here is an 81-residue protein sequence, read N- to C-terminus: Acyl carrier protein (81 aa).

The Carrier domain maps to A2–Q80. At S40 the chain carries O-(pantetheine 4'-phosphoryl)serine.

Belongs to the acyl carrier protein (ACP) family. 4'-phosphopantetheine is transferred from CoA to a specific serine of apo-ACP by AcpS. This modification is essential for activity because fatty acids are bound in thioester linkage to the sulfhydryl of the prosthetic group.

Its subcellular location is the cytoplasm. Its pathway is lipid metabolism; fatty acid biosynthesis. Functionally, carrier of the growing fatty acid chain in fatty acid biosynthesis. This is Acyl carrier protein from Micrococcus luteus (strain ATCC 4698 / DSM 20030 / JCM 1464 / CCM 169 / CCUG 5858 / IAM 1056 / NBRC 3333 / NCIMB 9278 / NCTC 2665 / VKM Ac-2230) (Micrococcus lysodeikticus).